A 118-amino-acid polypeptide reads, in one-letter code: MTRVKRGNVARKRRNKILKLAKGFRGSHSRLFRTANQQVMKALRNAYRDRRKRKRDFRRLWIARINAASRLHGLSYSQLIGNLKKANVQLNRKMLAQLAVLDPVAFDQVVTVAAQTRR.

This sequence belongs to the bacterial ribosomal protein bL20 family.

Its function is as follows. Binds directly to 23S ribosomal RNA and is necessary for the in vitro assembly process of the 50S ribosomal subunit. It is not involved in the protein synthesizing functions of that subunit. This chain is Large ribosomal subunit protein bL20, found in Cyanothece sp. (strain PCC 7425 / ATCC 29141).